Consider the following 406-residue polypeptide: Aminomethyltransferase, mitochondrial (406 aa).

A mitochondrion-targeting transit peptide spans 1–29 (MRGGLWQLGQSITRRLAQADKKTIGRRCF). Substrate contacts are provided by Glu234, Arg265, and Tyr403.

This sequence belongs to the GcvT family. As to quaternary structure, the glycine cleavage system is composed of four proteins: P, T, L and H.

The protein resides in the mitochondrion. It catalyses the reaction N(6)-[(R)-S(8)-aminomethyldihydrolipoyl]-L-lysyl-[protein] + (6S)-5,6,7,8-tetrahydrofolate = N(6)-[(R)-dihydrolipoyl]-L-lysyl-[protein] + (6R)-5,10-methylene-5,6,7,8-tetrahydrofolate + NH4(+). Its function is as follows. The glycine cleavage system catalyzes the degradation of glycine. The sequence is that of Aminomethyltransferase, mitochondrial (GDCST) from Solanum tuberosum (Potato).